Reading from the N-terminus, the 254-residue chain is Phosphoribosylaminoimidazole-succinocarboxamide synthase (254 aa).

It belongs to the SAICAR synthetase family.

The catalysed reaction is 5-amino-1-(5-phospho-D-ribosyl)imidazole-4-carboxylate + L-aspartate + ATP = (2S)-2-[5-amino-1-(5-phospho-beta-D-ribosyl)imidazole-4-carboxamido]succinate + ADP + phosphate + 2 H(+). Its pathway is purine metabolism; IMP biosynthesis via de novo pathway; 5-amino-1-(5-phospho-D-ribosyl)imidazole-4-carboxamide from 5-amino-1-(5-phospho-D-ribosyl)imidazole-4-carboxylate: step 1/2. The sequence is that of Phosphoribosylaminoimidazole-succinocarboxamide synthase from Acidiphilium cryptum (strain JF-5).